Here is an 82-residue protein sequence, read N- to C-terminus: MILNLFISKKQYTASLAKKRLKTLIKKKKKFFYQSSYLPQLKNDLLLVIAKYIKIQPNKMSIQIEKRKKNLLILEINITNVK.

The protein belongs to the MinE family.

In terms of biological role, prevents the cell division inhibition by proteins MinC and MinD at internal division sites while permitting inhibition at polar sites. This ensures cell division at the proper site by restricting the formation of a division septum at the midpoint of the long axis of the cell. This chain is Cell division topological specificity factor, found in Buchnera aphidicola subsp. Cinara cedri (strain Cc).